The chain runs to 816 residues: Leucine--tRNA ligase (816 aa).

A 'HIGH' region motif is present at residues Ser40 to His51. The 'KMSKS' region signature appears at Lys576–Ser580. ATP is bound at residue Lys579.

The protein belongs to the class-I aminoacyl-tRNA synthetase family.

It is found in the cytoplasm. The catalysed reaction is tRNA(Leu) + L-leucine + ATP = L-leucyl-tRNA(Leu) + AMP + diphosphate. The sequence is that of Leucine--tRNA ligase from Clostridium perfringens (strain ATCC 13124 / DSM 756 / JCM 1290 / NCIMB 6125 / NCTC 8237 / Type A).